Consider the following 241-residue polypeptide: Proteasome subunit beta type-1 (241 aa).

Met1 is subject to N-acetylmethionine. Positions 1 to 28 (MLSSVAAYSGAGRDLAMEPHSSVGPLQL) are excised as a propeptide. Ser58 is a glycosylation site (O-linked (GlcNAc) serine). Phosphoserine occurs at positions 62 and 68. Residue Tyr150 is modified to Phosphotyrosine. The residue at position 162 (Ser162) is a Phosphoserine. Residue Lys204 is modified to N6-acetyllysine. Ser209 is a glycosylation site (O-linked (GlcNAc) serine).

It belongs to the peptidase T1B family. In terms of assembly, the 26S proteasome consists of a 20S proteasome core and two 19S regulatory subunits. The 20S proteasome core is a barrel-shaped complex made of 28 subunits that are arranged in four stacked rings. The two outer rings are each formed by seven alpha subunits, and the two inner rings are formed by seven beta subunits. The proteolytic activity is exerted by three beta-subunits PSMB5, PSMB6 and PSMB7. Interacts with SERPINB2. Interacts with RFPL4A.

The protein resides in the cytoplasm. The protein localises to the nucleus. In terms of biological role, non-catalytic component of the 20S core proteasome complex involved in the proteolytic degradation of most intracellular proteins. This complex plays numerous essential roles within the cell by associating with different regulatory particles. Associated with two 19S regulatory particles, forms the 26S proteasome and thus participates in the ATP-dependent degradation of ubiquitinated proteins. The 26S proteasome plays a key role in the maintenance of protein homeostasis by removing misfolded or damaged proteins that could impair cellular functions, and by removing proteins whose functions are no longer required. Associated with the PA200 or PA28, the 20S proteasome mediates ubiquitin-independent protein degradation. This type of proteolysis is required in several pathways including spermatogenesis (20S-PA200 complex) or generation of a subset of MHC class I-presented antigenic peptides (20S-PA28 complex). In Bos taurus (Bovine), this protein is Proteasome subunit beta type-1 (PSMB1).